Consider the following 177-residue polypeptide: Disulfide bond formation protein B (177 aa).

The Cytoplasmic portion of the chain corresponds to 1-14; sequence MLALLKQFSEKRFV. A helical transmembrane segment spans residues 15–31; sequence WFLLAFSSLALESTALY. The Periplasmic segment spans residues 32–49; that stretch reads FQYGMGLQPCVLCVYERL. The cysteines at positions 41 and 44 are disulfide-linked. Residues 50 to 65 form a helical membrane-spanning segment; the sequence is AMIGLFVAGIIALLQP. Over 66–72 the chain is Cytoplasmic; it reads LAFILRL. A helical membrane pass occupies residues 73 to 90; sequence IALALGLFSSIKGLLISF. The Periplasmic segment spans residues 91-145; the sequence is RHLDLQMNPAPWKQCEFIPNFPETLPFHQWFPFIFNPTGSCNESQWSLFGLTMVQ. Cysteine 105 and cysteine 131 are disulfide-bonded. Residues 146–164 form a helical membrane-spanning segment; that stretch reads WLVVIFSLYVVILTLLLIA. Residues 165–177 lie on the Cytoplasmic side of the membrane; sequence QVIKTRKQRRLFN.

Belongs to the DsbB family.

It is found in the cell inner membrane. In terms of biological role, required for disulfide bond formation in some periplasmic proteins. Acts by oxidizing the DsbA protein. The chain is Disulfide bond formation protein B from Haemophilus influenzae (strain 86-028NP).